Consider the following 132-residue polypeptide: uncharacterized protein (132 aa).

The next 4 helical transmembrane spans lie at W6–S26, N34–F54, T59–Y79, and I106–I126.

The protein localises to the cell membrane. This is an uncharacterized protein from Bacillus subtilis (strain 168).